We begin with the raw amino-acid sequence, 76 residues long: Alpha-amylase inhibitor Z-2685 (76 aa).

Cystine bridges form between cysteine 9–cysteine 25 and cysteine 43–cysteine 70.

Its function is as follows. Inhibits mammalian alpha-amylases specifically but has no action on plant and microbial alpha-amylases. In Streptomyces rochei (Streptomyces parvullus), this protein is Alpha-amylase inhibitor Z-2685.